A 96-amino-acid chain; its full sequence is Ribonuclease P protein component 1 (96 aa).

This sequence belongs to the eukaryotic/archaeal RNase P protein component 1 family. In terms of assembly, consists of a catalytic RNA component and at least 5 protein subunits.

It localises to the cytoplasm. It catalyses the reaction Endonucleolytic cleavage of RNA, removing 5'-extranucleotides from tRNA precursor.. Functionally, part of ribonuclease P, a protein complex that generates mature tRNA molecules by cleaving their 5'-ends. In Methanococcus maripaludis (strain DSM 14266 / JCM 13030 / NBRC 101832 / S2 / LL), this protein is Ribonuclease P protein component 1.